A 412-amino-acid chain; its full sequence is LL-diaminopimelate aminotransferase (412 aa).

Residues Y15 and G42 each contribute to the substrate site. Pyridoxal 5'-phosphate contacts are provided by residues Y72, S108–K109, Y132, N187, Y218, and S246–S248. The substrate site is built by K109, Y132, and N187. K249 carries the N6-(pyridoxal phosphate)lysine modification. Positions 257 and 292 each coordinate pyridoxal 5'-phosphate. Substrate-binding residues include N292 and R388.

The protein belongs to the class-I pyridoxal-phosphate-dependent aminotransferase family. LL-diaminopimelate aminotransferase subfamily. Homodimer. Requires pyridoxal 5'-phosphate as cofactor.

It catalyses the reaction (2S,6S)-2,6-diaminopimelate + 2-oxoglutarate = (S)-2,3,4,5-tetrahydrodipicolinate + L-glutamate + H2O + H(+). The protein operates within amino-acid biosynthesis; L-lysine biosynthesis via DAP pathway; LL-2,6-diaminopimelate from (S)-tetrahydrodipicolinate (aminotransferase route): step 1/1. Involved in the synthesis of meso-diaminopimelate (m-DAP or DL-DAP), required for both lysine and peptidoglycan biosynthesis. Catalyzes the direct conversion of tetrahydrodipicolinate to LL-diaminopimelate. This Synechocystis sp. (strain ATCC 27184 / PCC 6803 / Kazusa) protein is LL-diaminopimelate aminotransferase.